We begin with the raw amino-acid sequence, 224 residues long: Protein-L-isoaspartate O-methyltransferase (224 aa).

Residue S70 is part of the active site.

This sequence belongs to the methyltransferase superfamily. L-isoaspartyl/D-aspartyl protein methyltransferase family.

It localises to the cytoplasm. It catalyses the reaction [protein]-L-isoaspartate + S-adenosyl-L-methionine = [protein]-L-isoaspartate alpha-methyl ester + S-adenosyl-L-homocysteine. Catalyzes the methyl esterification of L-isoaspartyl residues in peptides and proteins that result from spontaneous decomposition of normal L-aspartyl and L-asparaginyl residues. It plays a role in the repair and/or degradation of damaged proteins. In Cellvibrio japonicus (strain Ueda107) (Pseudomonas fluorescens subsp. cellulosa), this protein is Protein-L-isoaspartate O-methyltransferase.